A 570-amino-acid chain; its full sequence is Sulfite reductase [NADPH] hemoprotein beta-component (570 aa).

Cysteine 434, cysteine 440, cysteine 479, and cysteine 483 together coordinate [4Fe-4S] cluster. Residue cysteine 483 participates in siroheme binding.

Belongs to the nitrite and sulfite reductase 4Fe-4S domain family. In terms of assembly, alpha(8)-beta(8). The alpha component is a flavoprotein, the beta component is a hemoprotein. The cofactor is siroheme. Requires [4Fe-4S] cluster as cofactor.

It catalyses the reaction hydrogen sulfide + 3 NADP(+) + 3 H2O = sulfite + 3 NADPH + 4 H(+). Its pathway is sulfur metabolism; hydrogen sulfide biosynthesis; hydrogen sulfide from sulfite (NADPH route): step 1/1. Its function is as follows. Component of the sulfite reductase complex that catalyzes the 6-electron reduction of sulfite to sulfide. This is one of several activities required for the biosynthesis of L-cysteine from sulfate. This Zymomonas mobilis subsp. mobilis (strain ATCC 31821 / ZM4 / CP4) protein is Sulfite reductase [NADPH] hemoprotein beta-component.